We begin with the raw amino-acid sequence, 671 residues long: UvrABC system protein C (671 aa).

The disordered stretch occupies residues 1-20 (MPHLPDSMSPEAPAGPAPAT). Low complexity predominate over residues 10–20 (PEAPAGPAPAT). In terms of domain architecture, GIY-YIG spans 37–115 (PLPGVYRYFD…IKTLNPKYNI (79 aa)). The region spanning 232 to 267 (RQVMEALEARMMAHAEKLEFEQAAELRNQVAALSNV) is the UVR domain.

The protein belongs to the UvrC family. As to quaternary structure, interacts with UvrB in an incision complex.

It localises to the cytoplasm. Its function is as follows. The UvrABC repair system catalyzes the recognition and processing of DNA lesions. UvrC both incises the 5' and 3' sides of the lesion. The N-terminal half is responsible for the 3' incision and the C-terminal half is responsible for the 5' incision. This chain is UvrABC system protein C, found in Albidiferax ferrireducens (strain ATCC BAA-621 / DSM 15236 / T118) (Rhodoferax ferrireducens).